The primary structure comprises 129 residues: Large ribosomal subunit protein bL20 (129 aa).

This sequence belongs to the bacterial ribosomal protein bL20 family.

Binds directly to 23S ribosomal RNA and is necessary for the in vitro assembly process of the 50S ribosomal subunit. It is not involved in the protein synthesizing functions of that subunit. The polypeptide is Large ribosomal subunit protein bL20 (Mycolicibacterium gilvum (strain PYR-GCK) (Mycobacterium gilvum (strain PYR-GCK))).